The sequence spans 273 residues: Dermonecrotic toxin LhSicTox-alphaIA2av (273 aa).

The active site involves histidine 5. The Mg(2+) site is built by glutamate 25 and aspartate 27. The Nucleophile role is filled by histidine 41. 2 cysteine pairs are disulfide-bonded: cysteine 45/cysteine 51 and cysteine 47/cysteine 190. Aspartate 85 is a binding site for Mg(2+).

The protein belongs to the arthropod phospholipase D family. Class II subfamily. The cofactor is Mg(2+). Expressed by the venom gland.

It is found in the secreted. The catalysed reaction is an N-(acyl)-sphingosylphosphocholine = an N-(acyl)-sphingosyl-1,3-cyclic phosphate + choline. It carries out the reaction an N-(acyl)-sphingosylphosphoethanolamine = an N-(acyl)-sphingosyl-1,3-cyclic phosphate + ethanolamine. The enzyme catalyses a 1-acyl-sn-glycero-3-phosphocholine = a 1-acyl-sn-glycero-2,3-cyclic phosphate + choline. It catalyses the reaction a 1-acyl-sn-glycero-3-phosphoethanolamine = a 1-acyl-sn-glycero-2,3-cyclic phosphate + ethanolamine. Its function is as follows. Dermonecrotic toxins cleave the phosphodiester linkage between the phosphate and headgroup of certain phospholipids (sphingolipid and lysolipid substrates), forming an alcohol (often choline) and a cyclic phosphate. This toxin acts on sphingomyelin (SM). It may also act on ceramide phosphoethanolamine (CPE), lysophosphatidylcholine (LPC) and lysophosphatidylethanolamine (LPE), but not on lysophosphatidylserine (LPS), and lysophosphatidylglycerol (LPG). It acts by transphosphatidylation, releasing exclusively cyclic phosphate products as second products. Induces dermonecrosis, hemolysis, increased vascular permeability, edema, inflammatory response, and platelet aggregation. The chain is Dermonecrotic toxin LhSicTox-alphaIA2av from Loxosceles hirsuta (Recluse spider).